We begin with the raw amino-acid sequence, 158 residues long: Small ribosomal subunit protein uS9 (158 aa).

This sequence belongs to the universal ribosomal protein uS9 family.

The protein is Small ribosomal subunit protein uS9 of Brucella abortus (strain S19).